The primary structure comprises 280 residues: Proteasome subunit beta (280 aa).

A propeptide spans 1 to 53 (removed in mature form; by autocatalysis); the sequence is MSEYSAGRSGFSPAYLDRVGSSFTDFLAAAAPHLLPGSRPVPQIPVGNVTPHG. The Nucleophile role is filled by T54.

This sequence belongs to the peptidase T1B family. As to quaternary structure, the 20S proteasome core is composed of 14 alpha and 14 beta subunits that assemble into four stacked heptameric rings, resulting in a barrel-shaped structure. The two inner rings, each composed of seven catalytic beta subunits, are sandwiched by two outer rings, each composed of seven alpha subunits. The catalytic chamber with the active sites is on the inside of the barrel. Has a gated structure, the ends of the cylinder being occluded by the N-termini of the alpha-subunits. Is capped by the proteasome-associated ATPase, ARC.

The protein resides in the cytoplasm. It carries out the reaction Cleavage of peptide bonds with very broad specificity.. It participates in protein degradation; proteasomal Pup-dependent pathway. With respect to regulation, the formation of the proteasomal ATPase ARC-20S proteasome complex, likely via the docking of the C-termini of ARC into the intersubunit pockets in the alpha-rings, may trigger opening of the gate for substrate entry. Interconversion between the open-gate and close-gate conformations leads to a dynamic regulation of the 20S proteasome proteolysis activity. Its function is as follows. Component of the proteasome core, a large protease complex with broad specificity involved in protein degradation. The polypeptide is Proteasome subunit beta (Geodermatophilus obscurus (strain ATCC 25078 / DSM 43160 / JCM 3152 / CCUG 61914 / KCC A-0152 / KCTC 9177 / NBRC 13315 / NRRL B-3577 / G-20)).